A 25-amino-acid polypeptide reads, in one-letter code: Grammistin Pp 3 (25 aa).

The protein belongs to the grammistin family. Group 3 subfamily. As to quaternary structure, exists as aggregates of 3-4 molecules. In terms of tissue distribution, expressed by the skin glands.

The protein localises to the secreted. Thanks to its abundant amphiphilic alpha-helices, it may integrate into membrane phospholipids, leading to lysis of the membrane. Has hemolytic activity. Has antibacterial activity with a broad spectrum against various species of bacteria including both Gram-positive and Gram-negative groups. Also has ichthyotoxic activity. The chain is Grammistin Pp 3 from Pogonoperca punctata (Clown grouper).